The sequence spans 206 residues: Large ribosomal subunit protein uL4 (206 aa).

The tract at residues 42-93 (KKQQGTHKTKNRSEVSRTGAKMYKQKGTGRARHHSARAPQFRGGGKAHGPVV) is disordered. Positions 64–77 (YKQKGTGRARHHSA) are enriched in basic residues.

The protein belongs to the universal ribosomal protein uL4 family. Part of the 50S ribosomal subunit.

Functionally, one of the primary rRNA binding proteins, this protein initially binds near the 5'-end of the 23S rRNA. It is important during the early stages of 50S assembly. It makes multiple contacts with different domains of the 23S rRNA in the assembled 50S subunit and ribosome. Forms part of the polypeptide exit tunnel. The polypeptide is Large ribosomal subunit protein uL4 (Agrobacterium fabrum (strain C58 / ATCC 33970) (Agrobacterium tumefaciens (strain C58))).